Reading from the N-terminus, the 626-residue chain is UvrABC system protein C (626 aa).

Residues 26 to 105 (QEPGVYFMGD…IKQHQPHFNV (80 aa)) enclose the GIY-YIG domain. Residues 215 to 250 (QELHQLLTQQMEKAAADLKFEQAALIRDQINSLGKL) enclose the UVR domain.

Belongs to the UvrC family. As to quaternary structure, interacts with UvrB in an incision complex.

It is found in the cytoplasm. The UvrABC repair system catalyzes the recognition and processing of DNA lesions. UvrC both incises the 5' and 3' sides of the lesion. The N-terminal half is responsible for the 3' incision and the C-terminal half is responsible for the 5' incision. The polypeptide is UvrABC system protein C (Synechocystis sp. (strain ATCC 27184 / PCC 6803 / Kazusa)).